The primary structure comprises 423 residues: uncharacterized protein (423 aa).

3 residues coordinate substrate: serine 51, aspartate 138, and asparagine 150. Residues 170 to 171 and 214 to 220 each bind ATP; these read TD and TGGMRTK. The PUA domain maps to 315–406; that stretch reads KGAIIIDENS…EKIHDVLGYS (92 aa).

The protein belongs to the glutamate 5-kinase family.

It localises to the cytoplasm. This is an uncharacterized protein from Saccharomyces cerevisiae (strain ATCC 204508 / S288c) (Baker's yeast).